A 146-amino-acid polypeptide reads, in one-letter code: Pre-mRNA-splicing factor cwf14 (146 aa).

The protein belongs to the BUD31 (G10) family. As to quaternary structure, belongs to the 40S cdc5-associated complex (or cwf complex), a spliceosome sub-complex reminiscent of a late-stage spliceosome composed of the U2, U5 and U6 snRNAs and at least brr2, cdc5, cwf2/prp3, cwf3/syf1, cwf4/syf3, cwf5/ecm2, spp42/cwf6, cwf7/spf27, cwf8, cwf9, cwf10, cwf11, cwf12, prp45/cwf13, cwf14, cwf15, cwf16, cwf17, cwf18, cwf19, cwf20, cwf21, cwf22, cwf23, cwf24, cwf25, cwf26, cyp7/cwf27, cwf28, cwf29/ist3, lea1, msl1, prp5/cwf1, prp10, prp12/sap130, prp17, prp22, sap61, sap62, sap114, sap145, slu7, smb1, smd1, smd3, smf1, smg1 and syf2.

It is found in the nucleus. In terms of biological role, involved in mRNA splicing where it associates with cdc5 and the other cwf proteins as part of the spliceosome. In Schizosaccharomyces pombe (strain 972 / ATCC 24843) (Fission yeast), this protein is Pre-mRNA-splicing factor cwf14 (cwf14).